The chain runs to 116 residues: Protein Rev (116 aa).

Residues Ser-5 and Ser-8 each carry the phosphoserine; by host CK2 modification. The tract at residues 18–26 is homomultimerization; that stretch reads YIKILYQSN. Residues 26-48 are disordered; sequence NPYPKPEGTRQARRNRRRRWRAR. Positions 34–50 match the Nuclear localization signal and RNA-binding (RRE) motif; it reads TRQARRNRRRRWRARQR. Residues 36–48 are compositionally biased toward basic residues; that stretch reads QARRNRRRRWRAR. The Nuclear export signal and binding to XPO1 motif lies at 73-84; that stretch reads LQLPPLERLHIN. Residues 89–116 form a disordered region; the sequence is CGQGAEEGVGSSQISGESHTVLGSGTKE. Residues 98-116 show a composition bias toward polar residues; the sequence is GSSQISGESHTVLGSGTKE. Residue Ser-99 is modified to Phosphoserine; by host.

Belongs to the HIV-1 REV protein family. Homomultimer; when bound to the RRE. Multimeric assembly is essential for activity and may involve XPO1. Binds to human KPNB1, XPO1, TNPO1, RANBP5 and IPO7. Interacts with the viral Integrase. Interacts with human KHDRBS1. Interacts with human NAP1; this interaction decreases Rev multimerization and stimulates its activity. Interacts with human DEAD-box helicases DDX3 and DDX24; these interactions may serve for viral RNA export to the cytoplasm and packaging, respectively. Interacts with human PSIP1; this interaction may inhibit HIV-1 DNA integration by promoting dissociation of the Integrase-LEDGF/p75 complex. In terms of processing, asymmetrically arginine dimethylated at one site by host PRMT6. Methylation impairs the RNA-binding activity and export of viral RNA from the nucleus to the cytoplasm. Post-translationally, phosphorylated by protein kinase CK2. Presence of, and maybe binding to the N-terminus of the regulatory beta subunit of CK2 is necessary for CK2-mediated Rev's phosphorylation.

The protein resides in the host nucleus. The protein localises to the host nucleolus. It localises to the host cytoplasm. Functionally, escorts unspliced or incompletely spliced viral pre-mRNAs (late transcripts) out of the nucleus of infected cells. These pre-mRNAs carry a recognition sequence called Rev responsive element (RRE) located in the env gene, that is not present in fully spliced viral mRNAs (early transcripts). This function is essential since most viral proteins are translated from unspliced or partially spliced pre-mRNAs which cannot exit the nucleus by the pathway used by fully processed cellular mRNAs. Rev itself is translated from a fully spliced mRNA that readily exits the nucleus. Rev's nuclear localization signal (NLS) binds directly to KPNB1/Importin beta-1 without previous binding to KPNA1/Importin alpha-1. KPNB1 binds to the GDP bound form of RAN (Ran-GDP) and targets Rev to the nucleus. In the nucleus, the conversion from Ran-GDP to Ran-GTP dissociates Rev from KPNB1 and allows Rev's binding to the RRE in viral pre-mRNAs. Rev multimerization on the RRE via cooperative assembly exposes its nuclear export signal (NES) to the surface. Rev can then form a complex with XPO1/CRM1 and Ran-GTP, leading to nuclear export of the complex. Conversion from Ran-GTP to Ran-GDP mediates dissociation of the Rev/RRE/XPO1/RAN complex, so that Rev can return to the nucleus for a subsequent round of export. Beside KPNB1, also seems to interact with TNPO1/Transportin-1, RANBP5/IPO5 and IPO7/RANBP7 for nuclear import. The nucleoporin-like HRB/RIP is an essential cofactor that probably indirectly interacts with Rev to release HIV RNAs from the perinuclear region to the cytoplasm. The protein is Protein Rev of Homo sapiens (Human).